Here is a 201-residue protein sequence, read N- to C-terminus: Zinc finger protein 239 (201 aa).

7 C2H2-type zinc fingers span residues 6 to 28 (YKCD…HSVH), 34 to 56 (FKCD…KRVH), 62 to 84 (YACE…QRVH), 90 to 112 (YKCG…RCTH), 118 to 140 (YQCY…LRVH), 146 to 168 (YHCG…QRVH), and 174 to 196 (YECS…QRVH).

This sequence belongs to the krueppel C2H2-type zinc-finger protein family. In terms of tissue distribution, preferentially expressed in transformed mouse cells.

It is found in the nucleus. In terms of biological role, may be involved in transcriptional regulation. The protein is Zinc finger protein 239 (Znf239) of Mus musculus (Mouse).